Reading from the N-terminus, the 173-residue chain is Flavodoxin 2 (173 aa).

Positions 3-165 (MGLFYGSSTC…RIQTWCEQIL (163 aa)) constitute a Flavodoxin-like domain.

This sequence belongs to the flavodoxin family. FMN is required as a cofactor.

In terms of biological role, low-potential electron donor to a number of redox enzymes. The protein is Flavodoxin 2 (fldB) of Salmonella typhi.